Consider the following 162-residue polypeptide: MDKKINPKKVEMFNSLKEFLDGKDNIFFLDYRGLTVAELTKLRSRVEDEKGALKVVKNNIMKRVLKDKDIEGLDSYLLGPTAVVTAFDEANVIAKIFYEFVKTTTLKVKGGFVLGEVYDESKLSAYSKLPTKIESISLFMSVLKAPMSKLVRTLKALSDIKV.

The protein belongs to the universal ribosomal protein uL10 family. Part of the ribosomal stalk of the 50S ribosomal subunit. The N-terminus interacts with L11 and the large rRNA to form the base of the stalk. The C-terminus forms an elongated spine to which L12 dimers bind in a sequential fashion forming a multimeric L10(L12)X complex.

Its function is as follows. Forms part of the ribosomal stalk, playing a central role in the interaction of the ribosome with GTP-bound translation factors. In Borrelia recurrentis (strain A1), this protein is Large ribosomal subunit protein uL10.